Consider the following 166-residue polypeptide: Cilia- and flagella-associated protein 68 (166 aa).

Mn regions lie at residues 98 to 109 (TTYDANYSRKKP) and 139 to 149 (KSTYMTNYSEP).

It belongs to the CFAP68 family. As to quaternary structure, microtubule inner protein component of sperm flagellar doublet microtubules.

Its subcellular location is the cytoplasm. It localises to the cytoskeleton. The protein localises to the cilium axoneme. The protein resides in the flagellum axoneme. It is found in the nucleus. Its subcellular location is the cell projection. It localises to the cilium. In terms of biological role, microtubule inner protein (MIP) part of the dynein-decorated doublet microtubules (DMTs) in cilia axoneme, which is required for motile cilia beating. The chain is Cilia- and flagella-associated protein 68 (Cfap68) from Mus musculus (Mouse).